Consider the following 316-residue polypeptide: Protein lifeguard 2 (316 aa).

Residues 1 to 53 are disordered; sequence MTQGKLSVANKAPGTEGQQQVHGEKKEAPAVPSAPPSYEEATSGEGMKAGAFP. 3 helical membrane-spanning segments follow: residues 106–126, 138–158, and 165–185; these read VYTILLIQLLVTLAVVALFTF, PGWYWASYAVFFATYLTLACC, and FPWNLILLTVFTLSMAYLTGM. Asn191 carries N-linked (GlcNAc...) asparagine glycosylation. Transmembrane regions (helical) follow at residues 194 to 214, 225 to 245, 250 to 270, and 290 to 310; these read SVLLCLGITALVCLSVTVFSF, GVLFVLPMTLFFSGLILAILL, VPWLHAVYAALGAGVFTLFLA, and IFGALNIYLDIIYIFTFFLQL.

The protein belongs to the BI1 family. LFG subfamily. As to quaternary structure, interacts with FAS/TNFRSF6 and BAX.

Its subcellular location is the cell membrane. It localises to the membrane raft. The protein resides in the postsynaptic cell membrane. Its function is as follows. Antiapoptotic protein which protects cells uniquely from Fas-induced apoptosis. Regulates Fas-mediated apoptosis in neurons by interfering with caspase-8 activation. Plays a role in cerebellar development by affecting cerebellar size, internal granular layer (IGL) thickness, and Purkinje cell (PC) development. In Pongo abelii (Sumatran orangutan), this protein is Protein lifeguard 2 (FAIM2).